We begin with the raw amino-acid sequence, 125 residues long: Small ribosomal subunit protein uS13 (125 aa).

A disordered region spans residues 94–125 (SLPVRGQRTRTNARTRKGKRKTVAGKKKAVKK).

This sequence belongs to the universal ribosomal protein uS13 family. As to quaternary structure, part of the 30S ribosomal subunit. Forms a loose heterodimer with protein S19. Forms two bridges to the 50S subunit in the 70S ribosome.

Functionally, located at the top of the head of the 30S subunit, it contacts several helices of the 16S rRNA. In the 70S ribosome it contacts the 23S rRNA (bridge B1a) and protein L5 of the 50S subunit (bridge B1b), connecting the 2 subunits; these bridges are implicated in subunit movement. Contacts the tRNAs in the A and P-sites. This chain is Small ribosomal subunit protein uS13, found in Chlorobium chlorochromatii (strain CaD3).